Reading from the N-terminus, the 240-residue chain is tRNA (guanine-N(7)-)-methyltransferase (240 aa).

The S-adenosyl-L-methionine site is built by glutamate 71, glutamate 96, aspartate 123, and aspartate 146. Aspartate 146 is a catalytic residue. Substrate-binding positions include lysine 150, aspartate 182, and 219 to 222 (TKFE).

This sequence belongs to the class I-like SAM-binding methyltransferase superfamily. TrmB family.

The enzyme catalyses guanosine(46) in tRNA + S-adenosyl-L-methionine = N(7)-methylguanosine(46) in tRNA + S-adenosyl-L-homocysteine. It participates in tRNA modification; N(7)-methylguanine-tRNA biosynthesis. Its function is as follows. Catalyzes the formation of N(7)-methylguanine at position 46 (m7G46) in tRNA. This Hydrogenovibrio crunogenus (strain DSM 25203 / XCL-2) (Thiomicrospira crunogena) protein is tRNA (guanine-N(7)-)-methyltransferase.